Reading from the N-terminus, the 153-residue chain is Movement protein TGB3 (153 aa).

At 1–50 (MEAPAITHSSGCVCSDCQWSGSPTVDTKVYLGSGTHANTTKTRETSFLSV) the chain is on the cytoplasmic side. A helical transmembrane segment spans residues 51-71 (LNDNAWLFVIAALILCLYFII). Residues 72-127 (SKPHVDAVYTEFHQDLNGFSMKLAPGVPIDPKVIAAVKNWQKYPFGTDPRENMVTS) lie on the Lumenal side of the membrane. A helical transmembrane segment spans residues 128 to 148 (IVSGLRHSFCILLLVVVLLVY). Residues 149–153 (VCHKP) lie on the Cytoplasmic side of the membrane.

This sequence belongs to the virgaviridae TGB3 movement protein family. In terms of assembly, interacts with movement proteins TGB1 and TGB2. TGB1-TGB3-TGB2 complex formation is enhanced by ATP hydrolysis.

It localises to the host cell junction. It is found in the host plasmodesma. The protein localises to the host endoplasmic reticulum membrane. Its subcellular location is the host cytoplasm. The protein resides in the host cytoskeleton. In terms of biological role, participates in the transport of viral genome to neighboring plant cells directly through plasmodesmata, without any budding. TGBp2 and TGBp3 are necessary for intracellular delivery of TGBp1-containing vRNPs to plasmodesmata. Can gate plasmodesmata and increase their size exclusion limit. Induces host actin cytoskeleton network thickening, which probably plays a major role in virus cell-to-cell movement. In Arachis hypogaea (Peanut), this protein is Movement protein TGB3.